The chain runs to 138 residues: Dehydratase iacD (138 aa).

Residues 18–113 form the EthD domain; it reads GVSEEDFIEW…LKDQDVWMDN (96 aa).

It belongs to the tpcK family.

Its pathway is secondary metabolite biosynthesis. Its function is as follows. Dehydratase; part of the gene cluster that mediates the biosynthesis of iso-A82775C, a enylepoxycyclohexane and biosynthetic precursor of the chloropestolide anticancer natural products. Within the cluster, the prenyltransferase iacE prenylates siccayne to generate pestalodiol E, using dimethylallyl diphosphate (DMAPP) as cosubstrate. The probable oxidoreductase iacF is then involved in the epoxidation of pestalodiol F to pestalodiol F, which is further converted to pestalofone A by the short-chain dehydrogenase/reductase iacG. Iso-A82775C is subsequently generated from pestalofone A by the short-chain dehydrogenase/reductase iacC. Iso-A82775C is further condensed with maldoxin via a Diels-Alder reaction to produce the anticancer natural products chloropestolides A to E. This chain is Dehydratase iacD, found in Pestalotiopsis fici (strain W106-1 / CGMCC3.15140).